Reading from the N-terminus, the 149-residue chain is Transcriptional repressor NrdR (149 aa).

A zinc finger spans residues 3-34; the sequence is CPFCSAVDTKVIDSRLVAEGHQVRRRRECLLC. An ATP-cone domain is found at 49 to 139; that stretch reads PRVIKSNGSR…VYRSFEDIRE (91 aa).

It belongs to the NrdR family. Zn(2+) is required as a cofactor.

Functionally, negatively regulates transcription of bacterial ribonucleotide reductase nrd genes and operons by binding to NrdR-boxes. In Aeromonas salmonicida (strain A449), this protein is Transcriptional repressor NrdR.